Reading from the N-terminus, the 83-residue chain is Probable insulin-like peptide alpha-type 2 (83 aa).

A signal peptide spans 1 to 21 (MHTTTILICFFIFLVQVSTMD). 3 cysteine pairs are disulfide-bonded: cysteine 32–cysteine 66, cysteine 44–cysteine 79, and cysteine 54–cysteine 80.

It belongs to the insulin family.

The protein resides in the secreted. This Caenorhabditis elegans protein is Probable insulin-like peptide alpha-type 2 (ins-22).